The primary structure comprises 258 residues: Lyso-ornithine lipid O-acyltransferase (258 aa).

A helical transmembrane segment spans residues 7–29; it reads LLRSARLLGLVALGLGLAAWVSL.

The protein belongs to the 1-acyl-sn-glycerol-3-phosphate acyltransferase family. OlsA subfamily.

It localises to the membrane. The enzyme catalyses a lyso-ornithine lipid + a fatty acyl-[ACP] = an N(2)-[(3R)-3-(acyloxy)acyl]-L-ornithine lipid + holo-[ACP]. Its pathway is lipid metabolism. Functionally, catalyzes the second step in the formation of ornithine lipids, which are phosphorus-free membrane lipids. Uses acyl-acyl carrier protein (acyl-AcpP) as an acyl donor and converts lyso-ornithine lipid (LOL) into ornithine lipid (OL). The polypeptide is Lyso-ornithine lipid O-acyltransferase (Pseudomonas aeruginosa (strain ATCC 15692 / DSM 22644 / CIP 104116 / JCM 14847 / LMG 12228 / 1C / PRS 101 / PAO1)).